Here is a 147-residue protein sequence, read N- to C-terminus: Protegrin-2 (147 aa).

An N-terminal signal peptide occupies residues 1-29 (METQRASLCLGRWSLWLLLLALVVPSASA). A propeptide spanning residues 30 to 130 (QALSYREAVL…DITCNEVQGV (101 aa)) is cleaved from the precursor. Residues 61–80 (DQPPKADEDPGTPKPVSFTV) are disordered. Cystine bridges form between Cys-85–Cys-96, Cys-107–Cys-124, Cys-136–Cys-145, and Cys-138–Cys-143. At Val-146 the chain carries Valine amide.

The protein belongs to the cathelicidin family.

The protein localises to the secreted. Functionally, microbicidal activity. Active against E.coli, Listeria monocytogenes and C.albicans, in vitro. This Sus scrofa (Pig) protein is Protegrin-2 (NPG2).